Consider the following 84-residue polypeptide: Defensin-like protein 37 (84 aa).

The N-terminal stretch at 1–24 (MAVKLIYLFLFLYIALLISGRTMS) is a signal peptide. 3 disulfide bridges follow: C46/C67, C52/C79, and C56/C81.

The protein belongs to the DEFL family.

The protein resides in the secreted. The protein is Defensin-like protein 37 (EDA21) of Arabidopsis thaliana (Mouse-ear cress).